The following is a 250-amino-acid chain: Uridylate kinase (250 aa).

19 to 22 (KLSG) serves as a coordination point for ATP. Glycine 61 lines the UMP pocket. ATP-binding residues include glycine 62 and arginine 66. UMP contacts are provided by residues aspartate 81 and 142–149 (TGNPFFTT). ATP-binding residues include threonine 169, glutamine 170, tyrosine 175, and aspartate 178.

This sequence belongs to the UMP kinase family. As to quaternary structure, homohexamer.

The protein localises to the cytoplasm. It catalyses the reaction UMP + ATP = UDP + ADP. It functions in the pathway pyrimidine metabolism; CTP biosynthesis via de novo pathway; UDP from UMP (UMPK route): step 1/1. Inhibited by UTP. In terms of biological role, catalyzes the reversible phosphorylation of UMP to UDP. The chain is Uridylate kinase from Rhodospirillum rubrum (strain ATCC 11170 / ATH 1.1.1 / DSM 467 / LMG 4362 / NCIMB 8255 / S1).